Here is a 450-residue protein sequence, read N- to C-terminus: Glucose-6-phosphate isomerase (450 aa).

Glu291 (proton donor) is an active-site residue. Residues His312 and Lys426 contribute to the active site.

Belongs to the GPI family.

The protein localises to the cytoplasm. It carries out the reaction alpha-D-glucose 6-phosphate = beta-D-fructose 6-phosphate. The protein operates within carbohydrate biosynthesis; gluconeogenesis. Its pathway is carbohydrate degradation; glycolysis; D-glyceraldehyde 3-phosphate and glycerone phosphate from D-glucose: step 2/4. Catalyzes the reversible isomerization of glucose-6-phosphate to fructose-6-phosphate. This chain is Glucose-6-phosphate isomerase, found in Clostridium perfringens (strain SM101 / Type A).